We begin with the raw amino-acid sequence, 377 residues long: Flagellar P-ring protein (377 aa).

An N-terminal signal peptide occupies residues 1–33 (MRYPVSTGIAAPAWFAFFCAWAGLWTFSLPVQA).

The protein belongs to the FlgI family. The basal body constitutes a major portion of the flagellar organelle and consists of four rings (L,P,S, and M) mounted on a central rod.

The protein resides in the periplasm. Its subcellular location is the bacterial flagellum basal body. In terms of biological role, assembles around the rod to form the L-ring and probably protects the motor/basal body from shearing forces during rotation. The chain is Flagellar P-ring protein from Nitrosospira multiformis (strain ATCC 25196 / NCIMB 11849 / C 71).